A 72-amino-acid chain; its full sequence is UPF0270 protein PM1156 (72 aa).

It belongs to the UPF0270 family.

The polypeptide is UPF0270 protein PM1156 (Pasteurella multocida (strain Pm70)).